The sequence spans 362 residues: Melatonin receptor type 1B (362 aa).

Over 1–42 the chain is Extracellular; that stretch reads MSENGSFANCCEAGGWAVRPGWSGAGSARPSRTPRPPWVAPA. Asn4 is a glycosylation site (N-linked (GlcNAc...) asparagine). The helical transmembrane segment at 43-63 threads the bilayer; it reads LSAVLIVTTAVDVVGNLLVIL. Topologically, residues 64-76 are cytoplasmic; that stretch reads SVLRNRKLRNAGN. Residues 77–97 form a helical membrane-spanning segment; it reads LFLVSLALADLVVAFYPYPLI. Topologically, residues 98-115 are extracellular; the sequence is LVAIFYDGWALGEEHCKA. Residues Cys113 and Cys190 are joined by a disulfide bond. The helical transmembrane segment at 116 to 136 threads the bilayer; sequence SAFVMGLSVIGSVFNITAIAI. The Cytoplasmic portion of the chain corresponds to 137–155; the sequence is NRYCYICHSMAYHRIYRRW. The helical transmembrane segment at 156–176 threads the bilayer; the sequence is HTPLHICLIWLLTVVALLPNF. Melatonin is bound by residues Asn175 and Gln194. The Extracellular portion of the chain corresponds to 177 to 200; the sequence is FVGSLEYDPRIYSCTFIQTASTQY. Residues 201–221 traverse the membrane as a helical segment; the sequence is TAAVVVIHFLLPIAVVSFCYL. The Cytoplasmic segment spans residues 222–253; sequence RIWVLVLQARRKAKPESRLCLKPSDLRSFLTM. Residues 254 to 274 form a helical membrane-spanning segment; it reads FVVFVIFAICWAPLNCIGLAV. Over 275-287 the chain is Extracellular; it reads AINPQEMAPQIPE. Residues 288 to 308 form a helical membrane-spanning segment; it reads GLFVTSYLLAYFNSCLNAIVY. Residues 309 to 362 lie on the Cytoplasmic side of the membrane; that stretch reads GLLNQNFRREYKRILLALWNPRHCIQDASKGSHAEGLQSPAPPIIGVQHQADAL.

Belongs to the G-protein coupled receptor 1 family. In terms of assembly, interacts with GPR61, GPR62 and GPR135. Expressed in retina and less in brain and hippocampus.

It is found in the cell membrane. Functionally, high affinity receptor for melatonin. Likely to mediate the reproductive and circadian actions of melatonin. The activity of this receptor is mediated by pertussis toxin sensitive G proteins that inhibit adenylate cyclase activity. This chain is Melatonin receptor type 1B (MTNR1B), found in Homo sapiens (Human).